Here is a 127-residue protein sequence, read N- to C-terminus: MIKKIIFGIAILLSLSCFANSTTSDGSKKDAAKTNDGTTQKIIDDFSAYAGTIKPEVRKEIQEYRVEIVDINKKKRELYNSLSKEAQNFLAEQQKYKQKLSISKLPTEDDSPNNTANSKDNKDTDTK.

Residues 1 to 16 (MIKKIIFGIAILLSLS) form the signal peptide. Cys-17 carries N-palmitoyl cysteine lipidation. A lipid anchor (S-diacylglycerol cysteine) is attached at Cys-17. A coiled-coil region spans residues 56–101 (EVRKEIQEYRVEIVDINKKKRELYNSLSKEAQNFLAEQQKYKQKLS). The tract at residues 101-127 (SISKLPTEDDSPNNTANSKDNKDTDTK) is disordered.

It is found in the cell membrane. This is an uncharacterized protein from Rickettsia felis (strain ATCC VR-1525 / URRWXCal2) (Rickettsia azadi).